Consider the following 342-residue polypeptide: N-acetyl-gamma-glutamyl-phosphate reductase (342 aa).

Residue C149 is part of the active site.

It belongs to the NAGSA dehydrogenase family. Type 1 subfamily.

It is found in the cytoplasm. The catalysed reaction is N-acetyl-L-glutamate 5-semialdehyde + phosphate + NADP(+) = N-acetyl-L-glutamyl 5-phosphate + NADPH + H(+). The protein operates within amino-acid biosynthesis; L-arginine biosynthesis; N(2)-acetyl-L-ornithine from L-glutamate: step 3/4. Its function is as follows. Catalyzes the NADPH-dependent reduction of N-acetyl-5-glutamyl phosphate to yield N-acetyl-L-glutamate 5-semialdehyde. The polypeptide is N-acetyl-gamma-glutamyl-phosphate reductase (Thiobacillus denitrificans (strain ATCC 25259 / T1)).